A 451-amino-acid chain; its full sequence is Rab GDP-dissociation inhibitor (451 aa).

2 interaction with YPT1 regions span residues 106-112 and 234-259; these read RYVDFKQ and YPMY…TYML.

Belongs to the Rab GDI family. As to quaternary structure, interacts with the GDP-bound form of Rab GTPase YPT1. Interacts with YPT10.

It is found in the cytoplasm. In terms of biological role, regulates the GDP/GTP exchange reaction of SEC4 by inhibiting the dissociation of GDP from it, and the subsequent binding of GTP to SEC4. Plays an essential role in the yeast secretory pathway. Extracts GDP-bound YPT7 from vacuolar membranes, antagonizing vacuolar membrane fusion. This is Rab GDP-dissociation inhibitor (GDI1) from Saccharomyces cerevisiae (strain ATCC 204508 / S288c) (Baker's yeast).